Here is an 845-residue protein sequence, read N- to C-terminus: Prickle-like protein 2 (845 aa).

The 109-residue stretch at 18-126 folds into the PET domain; it reads FDFQRSSTSD…NVRPFPVTMT (109 aa). Ser-92 bears the Phosphoserine mark. LIM zinc-binding domains lie at 128–193, 193–253, and 253–317; these read AICE…CLKP, PRCA…LYAE, and EYCD…EDPN. 2 disordered regions span residues 314–346 and 483–546; these read EDPNGSDSSDSAFQNARAKESRRSAKIGKNKGK and YSDM…GSME. Polar residues predominate over residues 318-327; sequence GSDSSDSAFQ. Residues Ser-319, Ser-321, and Ser-322 each carry the phosphoserine modification. Thr-535, Thr-537, and Thr-540 each carry phosphothreonine. A phosphoserine mark is found at Ser-544 and Ser-547. Residues 558 to 581 are disordered; it reads AEGGAKRQEHLSRFSMPDLSKDSG. Residues Ser-608 and Ser-643 each carry the phosphoserine modification. Residues 642-700 form a disordered region; it reads QSFDFDGGIASSKLPGQEGVHIQPMSERTRRRTTSRDDNRRFRPHRSRRSRRSRSDNAL. The span at 683–693 shows a compositional bias: basic residues; that stretch reads FRPHRSRRSRR. The residue at position 732 (Ser-732) is a Phosphoserine. The tract at residues 823–845 is disordered; the sequence is STLGGRGQLHSRKRQKSKNCIIS. Cys-842 is subject to Cysteine methyl ester. A lipid anchor (S-farnesyl cysteine) is attached at Cys-842. Residues 843-845 constitute a propeptide, removed in mature form; sequence IIS.

The protein belongs to the prickle / espinas / testin family. In terms of tissue distribution, expressed in the hippocampus and cerebral cortex.

The protein localises to the nucleus membrane. The protein is Prickle-like protein 2 (Prickle2) of Mus musculus (Mouse).